Consider the following 137-residue polypeptide: Large ribosomal subunit protein uL16 (137 aa).

The protein belongs to the universal ribosomal protein uL16 family. In terms of assembly, part of the 50S ribosomal subunit.

Its function is as follows. Binds 23S rRNA and is also seen to make contacts with the A and possibly P site tRNAs. This is Large ribosomal subunit protein uL16 from Bradyrhizobium sp. (strain BTAi1 / ATCC BAA-1182).